Here is a 1252-residue protein sequence, read N- to C-terminus: Myosin-1 (1252 aa).

The disordered stretch occupies residues 1–27; sequence MAPSKKAGKKVTPASKKSAGQGKVAKA. The Myosin motor domain occupies 38-712; it reads VGVSDMTLLT…TLFALETMRD (675 aa). ATP is bound at residue 128-135; the sequence is GESGAGKT. At Ser-356 the chain carries Phosphoserine. Residues 403–485 form an actin-binding region; sequence IIGILDIFGF…PGIFAALNDA (83 aa). IQ domains follow at residues 716 to 736 and 737 to 762; these read HNMA…KHEC and ARRI…YGHQ. The 184-residue stretch at 770–953 folds into the TH1 domain; the sequence is RRRFSLLSYR…TVHVASGEPP (184 aa). Disordered regions lie at residues 945 to 1049 and 1103 to 1228; these read VHVA…PETP and PPKA…PATA. Pro residues-rich tracts occupy residues 989–999 and 1028–1046; these read RSVPKPKPVAQ and RPPP…PAKP. One can recognise an SH3 domain in the interval 1046 to 1104; sequence PETPMYRAKFAFEGQEGEMSLKKDDVVELVEKDDNGWWLVKMDGVEGWAPNNYLELVPP. A compositionally biased stretch (polar residues) spans 1162–1175; sequence ADTTPASSRPSSAI. Residues 1178–1193 are compositionally biased toward pro residues; that stretch reads KPPPPVAAKPKPPVIP. The segment covering 1194–1203 has biased composition (low complexity); it reads VKPSVSAKGP. Residues 1204-1215 are compositionally biased toward pro residues; the sequence is AKPPIPTAPRPP. Low complexity predominate over residues 1216–1228; sequence AASTSRSSKPATA.

It belongs to the TRAFAC class myosin-kinesin ATPase superfamily. Myosin family. Phosphorylation of the TEDS site (Ser-356) is required for the polarization of the actin cytoskeleton. Phosphorylation probably activates the myosin-I ATPase activity.

It is found in the cytoplasm. The protein resides in the cytoskeleton. It localises to the actin patch. Type-I myosin implicated in the organization of the actin cytoskeleton. Required for proper actin cytoskeleton polarization. At the cell cortex, assembles in patch-like structures together with proteins from the actin-polymerizing machinery and promotes actin assembly. Functions as actin nucleation-promoting factor (NPF) for the Arp2/3 complex. The polypeptide is Myosin-1 (MYO1) (Laccaria bicolor (strain S238N-H82 / ATCC MYA-4686) (Bicoloured deceiver)).